Here is an 835-residue protein sequence, read N- to C-terminus: Telomere length regulation protein TEL2 homolog (835 aa).

Disordered regions lie at residues 455 to 501 and 629 to 648; these read SADC…LAPY and LSHE…HSIR. Positions 464–473 are enriched in low complexity; the sequence is ESSPSKSCPK. Residues 474-486 show a composition bias toward basic and acidic residues; the sequence is AIEKSKMEAKADQ. Residues 488 to 499 are compositionally biased toward acidic residues; the sequence is SDSELDSDDDLA. Over residues 636 to 648 the composition is skewed to polar residues; it reads ESRSTGTGQHSIR.

Belongs to the TEL2 family.

Its subcellular location is the cytoplasm. It is found in the membrane. The protein localises to the nucleus. It localises to the chromosome. The protein resides in the telomere. Its function is as follows. Regulator of the DNA damage response (DDR). Part of the TTT complex that is required to stabilize protein levels of the phosphatidylinositol 3-kinase-related protein kinase (PIKK) family proteins. Promotes assembly, stabilizes and maintains the activity of TORC complexes, which regulate cell growth and survival in response to nutrient and hormonal signals. May be involved in telomere length regulation. In Xenopus laevis (African clawed frog), this protein is Telomere length regulation protein TEL2 homolog (telo2).